The chain runs to 537 residues: MDLFPIIMSVFAAIIGLVIGYVSVSAKMKSSKEAAELTLLNAEQEATNLRGQAEREADLIVKEAKRETSSLKKEALLEAKEEARKYREQVDAEFKSERQELKQIESRLTERASTLDRKDDNLSNKEKALEQKEQSLSDKSKHIDAREEQVAELEKQKAAELERVASLSQTEARDIILTQTEDKLSKEIATRIRDAEQDIKERSDKVAKNILVQAMQRIAGDYVAEQTNSTVHLPDDSMKGRIIGREGRNIRTFESLTGIDVIIDDTPEVVTLSGFDPIRREIARMTMEALLKDGRIHPARIEELVEKNRLEIDNRIREYGEAAAYEIGAPNLHPDLMKIMGRLQFRTSYGQNVLRHSIEVAKLSGIIAAELGENANLARRAGFLHDIGKSIDREVEGSHVEIGTELARKYKEHPVVVNTIASHHGDVEAESVIAVIVAAADALSAARPGARSESLESYIKRLQDLEEIANSFKGVKNSFALQAGREIRIMVQPDKIKDDKITILAHDVREKIENNLEYPGNIKVTVIREMRAVDYAK.

The helical transmembrane segment at 4–24 (FPIIMSVFAAIIGLVIGYVSV) threads the bilayer. The segment at 112 to 148 (ASTLDRKDDNLSNKEKALEQKEQSLSDKSKHIDAREE) is disordered. Positions 227-287 (TNSTVHLPDD…IRREIARMTM (61 aa)) constitute a KH domain. The HD domain maps to 353-446 (VLRHSIEVAK…VAAADALSAA (94 aa)).

The protein belongs to the RNase Y family.

It is found in the cell membrane. Its function is as follows. Endoribonuclease that initiates mRNA decay. This chain is Ribonuclease Y, found in Streptococcus sanguinis (strain SK36).